Here is a 1203-residue protein sequence, read N- to C-terminus: ATP-dependent helicase/nuclease subunit A (1203 aa).

Residues 4–472 (VKLTPEQNEA…IRLKENFRSR (469 aa)) form the UvrD-like helicase ATP-binding domain. 25–32 (ASAGSGKT) lines the ATP pocket. One can recognise a UvrD-like helicase C-terminal domain in the interval 503-785 (VQGNITDYPV…RVMTFHKSKG (283 aa)).

It belongs to the helicase family. AddA subfamily. As to quaternary structure, heterodimer of AddA and AddB/RexB. It depends on Mg(2+) as a cofactor.

It catalyses the reaction Couples ATP hydrolysis with the unwinding of duplex DNA by translocating in the 3'-5' direction.. It carries out the reaction ATP + H2O = ADP + phosphate + H(+). Its function is as follows. The heterodimer acts as both an ATP-dependent DNA helicase and an ATP-dependent, dual-direction single-stranded exonuclease. Recognizes the chi site generating a DNA molecule suitable for the initiation of homologous recombination. The AddA nuclease domain is required for chi fragment generation; this subunit has the helicase and 3' -&gt; 5' nuclease activities. The protein is ATP-dependent helicase/nuclease subunit A of Lactococcus lactis subsp. lactis (strain IL1403) (Streptococcus lactis).